The chain runs to 232 residues: Probable proteasome subunit alpha type-3 (232 aa).

It belongs to the peptidase T1A family. The 26S proteasome consists of a 20S proteasome core and two 19S regulatory subunits. The 20S proteasome core is composed of 28 subunits that are arranged in four stacked rings, resulting in a barrel-shaped structure. The two end rings are each formed by seven alpha subunits, and the two central rings are each formed by seven beta subunits. The catalytic chamber with the active sites is on the inside of the barrel.

It localises to the cytoplasm. Its subcellular location is the nucleus. The proteasome degrades poly-ubiquitinated proteins in the cytoplasm and in the nucleus. It is essential for the regulated turnover of proteins and for the removal of misfolded proteins. The proteasome is a multicatalytic proteinase complex that is characterized by its ability to cleave peptides with Arg, Phe, Tyr, Leu, and Glu adjacent to the leaving group at neutral or slightly basic pH. It has an ATP-dependent proteolytic activity. In Encephalitozoon cuniculi (strain GB-M1) (Microsporidian parasite), this protein is Probable proteasome subunit alpha type-3 (PRE9).